Consider the following 95-residue polypeptide: Large ribosomal subunit protein bL21 (95 aa).

This sequence belongs to the bacterial ribosomal protein bL21 family. As to quaternary structure, part of the 50S ribosomal subunit. Contacts protein L20.

Functionally, this protein binds to 23S rRNA in the presence of protein L20. This is Large ribosomal subunit protein bL21 from Rubrobacter xylanophilus (strain DSM 9941 / JCM 11954 / NBRC 16129 / PRD-1).